The primary structure comprises 137 residues: Large ribosomal subunit protein uL16 (137 aa).

Positions 1–22 (MLQPKRTKFRKQQKGRNRGLAH) are disordered.

Belongs to the universal ribosomal protein uL16 family. In terms of assembly, part of the 50S ribosomal subunit.

Binds 23S rRNA and is also seen to make contacts with the A and possibly P site tRNAs. The polypeptide is Large ribosomal subunit protein uL16 (Saccharophagus degradans (strain 2-40 / ATCC 43961 / DSM 17024)).